Consider the following 417-residue polypeptide: Imidazolonepropionase (417 aa).

Positions 80 and 82 each coordinate Fe(3+). Zn(2+) contacts are provided by histidine 80 and histidine 82. Arginine 89, tyrosine 152, and histidine 187 together coordinate 4-imidazolone-5-propanoate. Residue tyrosine 152 participates in N-formimidoyl-L-glutamate binding. Histidine 252 contributes to the Fe(3+) binding site. A Zn(2+)-binding site is contributed by histidine 252. A 4-imidazolone-5-propanoate-binding site is contributed by glutamate 255. Residue aspartate 326 participates in Fe(3+) binding. Zn(2+) is bound at residue aspartate 326. Residues asparagine 328 and glycine 330 each coordinate N-formimidoyl-L-glutamate. Residue serine 331 coordinates 4-imidazolone-5-propanoate.

Belongs to the metallo-dependent hydrolases superfamily. HutI family. Zn(2+) is required as a cofactor. It depends on Fe(3+) as a cofactor.

The protein resides in the cytoplasm. The enzyme catalyses 4-imidazolone-5-propanoate + H2O = N-formimidoyl-L-glutamate. Its pathway is amino-acid degradation; L-histidine degradation into L-glutamate; N-formimidoyl-L-glutamate from L-histidine: step 3/3. Catalyzes the hydrolytic cleavage of the carbon-nitrogen bond in imidazolone-5-propanoate to yield N-formimidoyl-L-glutamate. It is the third step in the universal histidine degradation pathway. This Bacteroides thetaiotaomicron (strain ATCC 29148 / DSM 2079 / JCM 5827 / CCUG 10774 / NCTC 10582 / VPI-5482 / E50) protein is Imidazolonepropionase.